A 130-amino-acid chain; its full sequence is Small ribosomal subunit protein uS9 (130 aa).

This sequence belongs to the universal ribosomal protein uS9 family.

The protein is Small ribosomal subunit protein uS9 of Caldicellulosiruptor saccharolyticus (strain ATCC 43494 / DSM 8903 / Tp8T 6331).